Here is a 417-residue protein sequence, read N- to C-terminus: NADH-quinone oxidoreductase subunit D (417 aa).

The protein belongs to the complex I 49 kDa subunit family. In terms of assembly, NDH-1 is composed of 14 different subunits. Subunits NuoB, C, D, E, F, and G constitute the peripheral sector of the complex.

It is found in the cell inner membrane. It carries out the reaction a quinone + NADH + 5 H(+)(in) = a quinol + NAD(+) + 4 H(+)(out). Its function is as follows. NDH-1 shuttles electrons from NADH, via FMN and iron-sulfur (Fe-S) centers, to quinones in the respiratory chain. The immediate electron acceptor for the enzyme in this species is believed to be ubiquinone. Couples the redox reaction to proton translocation (for every two electrons transferred, four hydrogen ions are translocated across the cytoplasmic membrane), and thus conserves the redox energy in a proton gradient. This Francisella philomiragia subsp. philomiragia (strain ATCC 25017 / CCUG 19701 / FSC 153 / O#319-036) protein is NADH-quinone oxidoreductase subunit D.